The following is a 1905-amino-acid chain: Low-density lipoprotein receptor-related protein 4 (1905 aa).

A signal peptide spans 1–20; that stretch reads MRRQWGALLLGALLCAHGLA. The Extracellular segment spans residues 21-1725; it reads SSPECACGRS…AAPGEGLHIS (1705 aa). LDL-receptor class A domains lie at 26–67, 70–106, 109–144, 147–183, 190–226, 230–266, 269–305, and 311–350; these read ACGR…DGCI, TCSPLDFHCDNGKCIRRSWVCDGDNDCEDDSDEQDCP, ECEEDEFPCQNGYCIRSLWHCDGDNDCGDNSDEQCD, KCSDKEFRCSDGSCIAEHWYCDGDTDCKDGSDEENCP, PCNLEEFQCAYGRCILDIYHCDGDDDCGDWSDESDCS, PCRSGEFMCDSGLCINAGWRCDGDADCDDQSDERNCT, MCTAEQFRCHSGRCVRLSWRCDGEDDCADNSDEENCE, and QCALDQFLCWNGRCIGQRKLCNGVNDCGDNSDESPQQNCR. Disulfide bonds link cysteine 27/cysteine 44, cysteine 34/cysteine 57, cysteine 51/cysteine 66, cysteine 71/cysteine 83, cysteine 78/cysteine 96, cysteine 90/cysteine 105, cysteine 110/cysteine 122, cysteine 117/cysteine 135, cysteine 129/cysteine 143, cysteine 148/cysteine 160, cysteine 155/cysteine 173, cysteine 167/cysteine 182, cysteine 191/cysteine 203, cysteine 198/cysteine 216, cysteine 210/cysteine 225, cysteine 231/cysteine 243, cysteine 238/cysteine 256, cysteine 250/cysteine 265, cysteine 270/cysteine 282, cysteine 277/cysteine 295, cysteine 289/cysteine 304, cysteine 312/cysteine 324, cysteine 319/cysteine 337, cysteine 331/cysteine 349, cysteine 358/cysteine 369, cysteine 365/cysteine 378, cysteine 380/cysteine 393, cysteine 399/cysteine 409, cysteine 405/cysteine 418, and cysteine 420/cysteine 433. Residue asparagine 264 is glycosylated (N-linked (GlcNAc...) asparagine). An EGF-like 1; calcium-binding domain is found at 354 to 394; that stretch reads GEENCNVNNGGCAQKCQMVRGAVQCTCHTGYRLTEDGHTCQ. Positions 395–434 constitute an EGF-like 2; calcium-binding domain; it reads DVNECAEEGYCSQGCTNSEGAFQCWCETGYELRPDRRSCK. LDL-receptor class B repeat units lie at residues 480 to 522, 523 to 565, 566 to 609, 610 to 652, and 653 to 693; these read ELVF…DWVH, DKLY…HPME, GTIY…DYAG, RRMY…FEDS, and LYWT…LHPQ. Asparagine 498 is a glycosylation site (N-linked (GlcNAc...) asparagine). An EGF-like 3 domain is found at 698-737; sequence GKNRCGDNNGGCTHLCLPSGQNYTCACPTGFRKISSHACA. Cystine bridges form between cysteine 702–cysteine 713, cysteine 709–cysteine 722, and cysteine 724–cysteine 736. Asparagine 719 is a glycosylation site (N-linked (GlcNAc...) asparagine). LDL-receptor class B repeat units lie at residues 785–827, 828–870, 871–914, 915–956, and 957–998; these read DHVY…DWVT, NKLY…EPMG, GYMY…DYGS, QRLY…LYGE, and RIYW…FHRR. Residue asparagine 901 is glycosylated (N-linked (GlcNAc...) asparagine). The N-linked (GlcNAc...) asparagine glycan is linked to asparagine 1077. LDL-receptor class B repeat units lie at residues 1093–1135, 1136–1178, 1179–1222, 1223–1263, 1264–1306, 1397–1439, 1440–1482, 1483–1526, 1527–1568, and 1569–1610; these read GKVY…DAIG, RKVY…YHEM, GFMY…DKAS, SQLL…LLDS, YIYW…DRAQ, GKVY…DWVA, RNLY…FPRK, GYLF…DYDT, RRIY…QDRW, and IYWT…SPQR. 2 N-linked (GlcNAc...) asparagine glycosylation sites follow: asparagine 1415 and asparagine 1467. The disordered stretch occupies residues 1659-1686; it reads PRATGMSEKSPVLPNTPPTTLYSSTTRT. A compositionally biased stretch (low complexity) spans 1676-1686; the sequence is PTTLYSSTTRT. The chain crosses the membrane as a helical span at residues 1726 to 1746; the sequence is YAIGGLLSILLILVVIAALML. Over 1747–1905 the chain is Cytoplasmic; the sequence is YRHKKSKFTD…ERKLSSESQV (159 aa). The short motif at 1766–1769 is the Endocytosis signal element; the sequence is NPSY. A disordered region spans residues 1852-1905; the sequence is ASSGSLDDTETEQLLQEEQSECSSVHTAATPERRGSLPDTGWKHERKLSSESQV. Over residues 1882–1905 the composition is skewed to basic and acidic residues; it reads PERRGSLPDTGWKHERKLSSESQV.

This sequence belongs to the LDLR family. As to quaternary structure, homooligomer. Interacts with MUSK; the heterodimer forms an AGRIN receptor complex that binds AGRIN resulting in activation of MUSK. Interacts (via the extracellular domain) with SOST; the interaction facilitates the inhibition of Wnt signaling. Interacts with MESD; the interaction promotes glycosylation of LRP4 and its cell-surface expression. In terms of tissue distribution, expressed in bone; present in osteoblasts and osteocytes. No expression is observed in osteoclast. Expressed in several regions of the brain.

Its subcellular location is the cell membrane. In terms of biological role, mediates SOST-dependent inhibition of bone formation. Functions as a specific facilitator of SOST-mediated inhibition of Wnt signaling. Plays a key role in the formation and the maintenance of the neuromuscular junction (NMJ), the synapse between motor neuron and skeletal muscle. Directly binds AGRIN and recruits it to the MUSK signaling complex. Mediates the AGRIN-induced phosphorylation of MUSK, the kinase of the complex. The activation of MUSK in myotubes induces the formation of NMJ by regulating different processes including the transcription of specific genes and the clustering of AChR in the postsynaptic membrane. Alternatively, may be involved in the negative regulation of the canonical Wnt signaling pathway, being able to antagonize the LRP6-mediated activation of this pathway. More generally, has been proposed to function as a cell surface endocytic receptor binding and internalizing extracellular ligands for degradation by lysosomes. May play an essential role in the process of digit differentiation. The polypeptide is Low-density lipoprotein receptor-related protein 4 (LRP4) (Homo sapiens (Human)).